The primary structure comprises 148 residues: 3-dehydroquinate dehydratase (148 aa).

Tyr26 (proton acceptor) is an active-site residue. The substrate site is built by Asn75, His81, and Asp88. Catalysis depends on His101, which acts as the Proton donor. Residues Leu102–Ser103 and Arg112 each bind substrate.

Belongs to the type-II 3-dehydroquinase family. As to quaternary structure, homododecamer.

It catalyses the reaction 3-dehydroquinate = 3-dehydroshikimate + H2O. The protein operates within metabolic intermediate biosynthesis; chorismate biosynthesis; chorismate from D-erythrose 4-phosphate and phosphoenolpyruvate: step 3/7. In terms of biological role, catalyzes a trans-dehydration via an enolate intermediate. The chain is 3-dehydroquinate dehydratase from Shewanella frigidimarina (strain NCIMB 400).